The chain runs to 195 residues: tRNA (pseudouridine(54)-N(1))-methyltransferase (195 aa).

Leu-129 serves as a coordination point for S-adenosyl-L-methionine.

This sequence belongs to the methyltransferase superfamily. TrmY family. In terms of assembly, homodimer.

The protein resides in the cytoplasm. It catalyses the reaction pseudouridine(54) in tRNA + S-adenosyl-L-methionine = N(1)-methylpseudouridine(54) in tRNA + S-adenosyl-L-homocysteine + H(+). Its function is as follows. Specifically catalyzes the N1-methylation of pseudouridine at position 54 (Psi54) in tRNAs. The chain is tRNA (pseudouridine(54)-N(1))-methyltransferase from Methanocorpusculum labreanum (strain ATCC 43576 / DSM 4855 / Z).